We begin with the raw amino-acid sequence, 75 residues long: Large ribosomal subunit protein bL31 (75 aa).

It belongs to the bacterial ribosomal protein bL31 family. Type A subfamily. As to quaternary structure, part of the 50S ribosomal subunit.

In terms of biological role, binds the 23S rRNA. This chain is Large ribosomal subunit protein bL31, found in Chlorobium luteolum (strain DSM 273 / BCRC 81028 / 2530) (Pelodictyon luteolum).